We begin with the raw amino-acid sequence, 865 residues long: Catenin alpha-2 (865 aa).

Residues 823-839 (PEKKPLVKREKPEECQT) show a composition bias toward basic and acidic residues. The interval 823-851 (PEKKPLVKREKPEECQTRVRRGSQKKHIS) is disordered. Over residues 840 to 850 (RVRRGSQKKHI) the composition is skewed to basic residues.

It belongs to the vinculin/alpha-catenin family.

The protein localises to the cell membrane. Its subcellular location is the cytoplasm. It is found in the cytoskeleton. The protein resides in the cell junction. It localises to the adherens junction. The protein localises to the cell projection. Its subcellular location is the axon. It is found in the nucleus. Functionally, may function as a linker between cadherin adhesion receptors and the cytoskeleton to regulate cell-cell adhesion and differentiation in the nervous system. This chain is Catenin alpha-2 (Ctnna2), found in Danio rerio (Zebrafish).